A 388-amino-acid chain; its full sequence is Mannitol-1-phosphate 5-dehydrogenase (388 aa).

5–16 (AVHFGGGNIGRG) serves as a coordination point for NAD(+). K213 is an active-site residue.

It belongs to the mannitol dehydrogenase family. Monomer.

It carries out the reaction D-mannitol 1-phosphate + NAD(+) = beta-D-fructose 6-phosphate + NADH + H(+). In terms of biological role, catalyzes the NAD(H)-dependent interconversion of D-fructose 6-phosphate and D-mannitol 1-phosphate in the mannitol metabolic pathway. This Penicillium rubens (strain ATCC 28089 / DSM 1075 / NRRL 1951 / Wisconsin 54-1255) (Penicillium chrysogenum) protein is Mannitol-1-phosphate 5-dehydrogenase.